The sequence spans 200 residues: Outer-membrane lipoprotein carrier protein (200 aa).

Residues 1–18 form the signal peptide; the sequence is MKAVVFAMVMAVSFNVFA.

The protein belongs to the LolA family. In terms of assembly, monomer.

The protein resides in the periplasm. Functionally, participates in the translocation of lipoproteins from the inner membrane to the outer membrane. Only forms a complex with a lipoprotein if the residue after the N-terminal Cys is not an aspartate (The Asp acts as a targeting signal to indicate that the lipoprotein should stay in the inner membrane). This is Outer-membrane lipoprotein carrier protein from Idiomarina loihiensis (strain ATCC BAA-735 / DSM 15497 / L2-TR).